The chain runs to 1682 residues: Merozoite surface protein 1 (1682 aa).

Residues 1-19 form the signal peptide; sequence MKIIFFLCSFLFFIINTQC. The segment at 68 to 110 is disordered; sequence AVSTQSAKNPPGATVPSGTASTKGAIRSPGAANPSDDSSDSDA. N233, N462, N528, and N599 each carry an N-linked (GlcNAc...) asparagine glycan. Positions 696 to 729 are disordered; sequence SETTEDGGHSTHTLSQSGETEVTEETEETVGHTT. 6 N-linked (GlcNAc...) asparagine glycosylation sites follow: N785, N881, N901, N947, N1071, and N1178. Residues 870 to 918 are disordered; that stretch reads ITGTSSTSSPGNTTVNTAQSATHSNSQNQQSNASSTNTQNGVAVSSGPA. Positions 871-909 are enriched in low complexity; it reads TGTSSTSSPGNTTVNTAQSATHSNSQNQQSNASSTNTQN. 2 disordered regions span residues 1212–1241 and 1433–1453; these read TPPQ…TQIP and KEFP…DEQK. Residues 1227–1241 are compositionally biased toward polar residues; sequence VSGSSGSTKEETQIP. Over residues 1437-1446 the composition is skewed to pro residues; that stretch reads SSPPTTPPSP. A glycan (N-linked (GlcNAc...) asparagine) is linked at N1569. 2 EGF-like domains span residues 1573–1613 and 1614–1661; these read HQCV…VENP and NPTC…IFCS. Cystine bridges form between C1575-C1586, C1580-C1596, C1598-C1609, C1617-C1630, C1624-C1644, and C1646-C1660. The GPI-anchor amidated serine moiety is linked to residue S1661. Positions 1662–1682 are cleaved as a propeptide — removed in mature form; sequence SSNFLGISFLLILMLILYSFI.

As to quaternary structure, forms a complex composed of subunits p83, p30, p38, and p42 which remain non-covalently associated; the complex is formed at the merozoite surface prior to egress from host erythrocytes. Forms a complex composed of processed MSP1 subunits, MSP6 subunit p36 and MSP7; the complex is formed at the merozoite surface prior to egress from host erythrocytes. Within the complex, interacts (via subunit p38) with MSP6 subunit p36 and (via subunits p83, p30 and p38) with MSP7 (via subunit p22). Forms a complex composed of MSP1, MSP6, DBLMSP1 and DBLMSP2. Within the complex, interacts (via subunit p38) with DBLMSP1 and DBLMSP2. Forms a complex composed of MSP1, and rhoptry proteins RhopH3, RAP1 and CLAG9/RhopH3. Within the complex, interacts (via subunits p42 and p19) with RhopH3 (via C-terminus). Forms a complex composed of MSP1, MSP6, MSP7, MSP9 and MSP3; within the complex, MSP6 and MSP9 mediate the binding to the host erythrocyte. Interacts (via subunits p19 and p42) with MSP9; the interaction is direct; MSP1 subunits p19 or p42, and MSP9 form a co-ligand complex that interacts with host SLC4A1/Band 3 protein. May interact with PFD6. Interacts with host spectrin. Interacts with host glycophorin GYPA in a sialic acid-independent manner. In terms of assembly, interacts with host proinflammatory cytokine S100P; the interaction blocks S100P inflammatory and chemotactic activities. As to quaternary structure, interacts with host SLC4A1/Band 3 (via 5ABC region) on the host erythrocyte surface in a sialic acid-independent manner. Post-translationally, the p190 precursor is cleaved by SUB1 prior to merozoite egress into 4 subunits p83, p30, p38, and p42 which remain non-covalently associated. SUB1-mediated proteolytic cleavage occurs in an orderly manner; the first cleavage occurs at the p30/p38 site, followed by cleavage at the p83/p30 site, the last cleavage occurs at the p38/p42 site. The order of cleavage is essential for parasite viability. SUB1-mediated processing is essential for merozoite egress. In a second processing step during erythrocyte invasion, p42 is cleaved by SUB2 into p33 and p19; the latter remains attached to the merozoite surface via its GPI-anchor and is endocytosed during the subsequent ring stage.

Its subcellular location is the cell membrane. It is found in the secreted. It localises to the vacuole membrane. In terms of biological role, during the asexual blood stage, involved in merozoite egress from host erythrocytes possibly via its interaction with the host cytoskeleton protein spectrin resulting in the destabilization of the host cytoskeleton and thus leading to erythrocyte cell membrane rupture. Involved in the binding to host erythrocytes and is required for host erythrocyte invasion. By binding to host proinflammatory cytokine S100P may interfere with host immune responses. Its function is as follows. Involved in merozoite invasion of host erythrocytes. May play a role in the biogenesis and/or function of the food vacuole during the intraerythrocytic development. The sequence is that of Merozoite surface protein 1 from Plasmodium falciparum (isolate ro-33 / Ghana).